The following is a 636-amino-acid chain: Translation factor GUF1, mitochondrial (636 aa).

The tr-type G domain occupies 35–218 (SNYRNFSIVA…AIIRDIPGPR (184 aa)). Residues 44-51 (AHVDHGKS), 111-115 (DTPGH), and 165-168 (NKID) contribute to the GTP site.

Belongs to the TRAFAC class translation factor GTPase superfamily. Classic translation factor GTPase family. LepA subfamily.

Its subcellular location is the mitochondrion inner membrane. It carries out the reaction GTP + H2O = GDP + phosphate + H(+). Its function is as follows. Promotes mitochondrial protein synthesis. May act as a fidelity factor of the translation reaction, by catalyzing a one-codon backward translocation of tRNAs on improperly translocated ribosomes. Binds to mitochondrial ribosomes in a GTP-dependent manner. The polypeptide is Translation factor GUF1, mitochondrial (Debaryomyces hansenii (strain ATCC 36239 / CBS 767 / BCRC 21394 / JCM 1990 / NBRC 0083 / IGC 2968) (Yeast)).